The following is a 367-amino-acid chain: Phosphoribosylaminoimidazole-succinocarboxamide synthase (367 aa).

This sequence belongs to the SAICAR synthetase family.

The enzyme catalyses 5-amino-1-(5-phospho-D-ribosyl)imidazole-4-carboxylate + L-aspartate + ATP = (2S)-2-[5-amino-1-(5-phospho-beta-D-ribosyl)imidazole-4-carboxamido]succinate + ADP + phosphate + 2 H(+). The protein operates within purine metabolism; IMP biosynthesis via de novo pathway; 5-amino-1-(5-phospho-D-ribosyl)imidazole-4-carboxamide from 5-amino-1-(5-phospho-D-ribosyl)imidazole-4-carboxylate: step 1/2. This is Phosphoribosylaminoimidazole-succinocarboxamide synthase from Shewanella sp. (strain ANA-3).